Here is a 450-residue protein sequence, read N- to C-terminus: UPF0210 protein MK1214 (450 aa).

It belongs to the UPF0210 family.

This chain is UPF0210 protein MK1214, found in Methanopyrus kandleri (strain AV19 / DSM 6324 / JCM 9639 / NBRC 100938).